The chain runs to 229 residues: Serine acetyltransferase (229 aa).

It belongs to the transferase hexapeptide repeat family.

It is found in the cytoplasm. It carries out the reaction L-serine + acetyl-CoA = O-acetyl-L-serine + CoA. Its pathway is amino-acid biosynthesis; L-cysteine biosynthesis; L-cysteine from L-serine: step 1/2. Functionally, catalyzes the acetylation of serine by acetyl-CoA to produce O-acetylserine (OAS). This is Serine acetyltransferase (cysE) from Mycobacterium tuberculosis (strain ATCC 25618 / H37Rv).